The primary structure comprises 195 residues: Thymidine kinase (195 aa).

Residues 15–22 (GSMFSGKT) and 91–94 (DEAN) contribute to the ATP site. The active-site Proton acceptor is Glu-92. Zn(2+) contacts are provided by Cys-148, Cys-151, Cys-186, and Cys-189.

Belongs to the thymidine kinase family. As to quaternary structure, homotetramer.

It localises to the cytoplasm. The enzyme catalyses thymidine + ATP = dTMP + ADP + H(+). The chain is Thymidine kinase from Halobacterium salinarum (strain ATCC 29341 / DSM 671 / R1).